Reading from the N-terminus, the 235-residue chain is MNKNVMVKGLTALTILTSLGFAENISNQPHSIAKAEKNVKEITDATKAPYNSVVAFAGGTGVVVGKNTIVTNKHIAKSNDIFKNRVAAHYSSKGKGGGNYDVKDIVEYPGKEDLAIVHVHETSTEGLNFNKNVSYTKFAEGAKAKDRISVIGYPKGAQTKYKMFESTGTINHISGTFIEFDAYAQPGNSGSPVLNSKHELIGILYAGSGKDESEKNFGVYFTPQLKEFIQNNIEK.

The N-terminal stretch at 1-35 (MNKNVMVKGLTALTILTSLGFAENISNQPHSIAKA) is a signal peptide. Active-site charge relay system residues include H74, D113, and S189.

This sequence belongs to the peptidase S1B family.

It is found in the secreted. The chain is Serine protease SplA (splA) from Staphylococcus aureus (strain Mu3 / ATCC 700698).